The following is an 816-amino-acid chain: Protein hunchback (816 aa).

Disordered stretches follow at residues 33-92 (LSHH…QPMD), 129-151 (QQHF…GGFN), 165-185 (YYGG…PTAV), and 197-229 (ALTP…LMSN). Low complexity-rich tracts occupy residues 49 to 60 (SNSNSGASSPRQ), 79 to 89 (QQQQQQQQQQQ), and 129 to 139 (QQHFQAAQHQQ). Thr199 bears the Phosphothreonine mark. Phosphoserine occurs at positions 209, 228, 230, and 231. Residues 219–229 (EPEKEHDLMSN) show a composition bias toward basic and acidic residues. C2H2-type zinc fingers lie at residues 261-283 (YKCK…TRTH), 290-312 (LQCA…IRKH), 318-340 (FQCD…RKSH), and 346-364 (YRCA…FKLH). Disordered regions lie at residues 387-427 (VIDV…QQQQ), 536-612 (LQQQ…QLPH), and 679-734 (GSSA…SNPT). 2 stretches are compositionally biased toward low complexity: residues 399 to 427 (SKSF…QQQQ) and 536 to 560 (LQQQ…QQQQ). Residues 567-578 (NEEDEEEEEHED) are compositionally biased toward acidic residues. A phosphoserine mark is found at Ser584 and Ser587. Over residues 712–734 (SASSTASSSGNSSNASSSTSNPT) the composition is skewed to low complexity. 2 consecutive C2H2-type zinc fingers follow at residues 763–785 (YECK…MGYH) and 791–815 (FKCN…RNAH).

Belongs to the hunchback C2H2-type zinc-finger protein family.

Its subcellular location is the nucleus. Gap class segmentation protein that controls development of head structures. The chain is Protein hunchback from Drosophila virilis (Fruit fly).